Here is a 475-residue protein sequence, read N- to C-terminus: Ribulose bisphosphate carboxylase large chain (475 aa).

A propeptide spanning residues 1–2 (MS) is cleaved from the precursor. Proline 3 carries the post-translational modification N-acetylproline. Residue lysine 14 is modified to N6,N6,N6-trimethyllysine. Substrate-binding residues include asparagine 123 and threonine 173. Catalysis depends on lysine 175, which acts as the Proton acceptor. Lysine 177 serves as a coordination point for substrate. 3 residues coordinate Mg(2+): lysine 201, aspartate 203, and glutamate 204. Residue lysine 201 is modified to N6-carboxylysine. Histidine 294 (proton acceptor) is an active-site residue. 3 residues coordinate substrate: arginine 295, histidine 327, and serine 379.

This sequence belongs to the RuBisCO large chain family. Type I subfamily. Heterohexadecamer of 8 large chains and 8 small chains; disulfide-linked. The disulfide link is formed within the large subunit homodimers. Mg(2+) is required as a cofactor. In terms of processing, the disulfide bond which can form in the large chain dimeric partners within the hexadecamer appears to be associated with oxidative stress and protein turnover.

The protein resides in the plastid. It is found in the chloroplast. It catalyses the reaction 2 (2R)-3-phosphoglycerate + 2 H(+) = D-ribulose 1,5-bisphosphate + CO2 + H2O. It carries out the reaction D-ribulose 1,5-bisphosphate + O2 = 2-phosphoglycolate + (2R)-3-phosphoglycerate + 2 H(+). Functionally, ruBisCO catalyzes two reactions: the carboxylation of D-ribulose 1,5-bisphosphate, the primary event in carbon dioxide fixation, as well as the oxidative fragmentation of the pentose substrate in the photorespiration process. Both reactions occur simultaneously and in competition at the same active site. The polypeptide is Ribulose bisphosphate carboxylase large chain (Pinus edulis (Pinyon pine)).